The chain runs to 92 residues: UPF0250 protein XOO3732 (92 aa).

The protein belongs to the UPF0250 family.

In Xanthomonas oryzae pv. oryzae (strain MAFF 311018), this protein is UPF0250 protein XOO3732.